Consider the following 200-residue polypeptide: Early E1A 21 kDa protein (200 aa).

Residues 78–98 (QDSTTATSAEEPSASTDSISS) form a disordered region. Residues 114–118 (LRCYE) carry the LXCXE motif, interaction with host RB1 motif. A zinc finger spans residues 136–151 (CSTCGGHEVNGFCSLC). The Nuclear localization signal motif lies at 196 to 200 (SRHDE).

As to quaternary structure, interaction with host RB1 induces the aberrant dissociation of RB1-E2F1 complex thereby disrupting RB1's activity.

Functionally, E1A protein has both transforming and trans-activating activities. Plays a role in viral genome replication by driving entry of quiescent cells into the cell cycle. Disrupts the function of host retinoblastoma protein RB1/pRb and isoform early E1A 26 kDa protein stabilizes TP53, which are key regulators of the cell cycle. Induces the disassembly of the E2F1 transcription factors from RB1 by direct competition for the same binding site on RB1, with subsequent transcriptional activation of E2F1-regulated S-phase genes. Inactivation of the ability of RB1 to arrest the cell cycle is critical for cellular transformation, uncontrolled cellular growth and proliferation induced by viral infection. Stimulation of progression from G1 to S phase allows the virus to efficiently use the cellular DNA replicating machinery to achieve viral genome replication. In Murine adenovirus A serotype 1 (MAdV-1), this protein is Early E1A 21 kDa protein.